Reading from the N-terminus, the 2399-residue chain is Norsolorinic acid synthase (2399 aa).

The tract at residues 10–247 (LVFGDQTYDF…RQIPIYVPAH (238 aa)) is starter unit:ACP transacylase (SAT) domain. One can recognise a Ketosynthase family 3 (KS3) domain in the interval 372 to 805 (KSKLAIVSMS…GGNTALLIED (434 aa)). Residues cysteine 544, histidine 679, and histidine 722 each act as for beta-ketoacyl synthase activity in the active site. The tract at residues 905–1192 (FAFTGQGSQY…LCGMIKNILG (288 aa)) is malonyl-CoA:ACP transacylase (MAT) domain. Serine 995 (for acyl/malonyl transferase activity) is an active-site residue. The segment at 1307-1327 (VQEAPAAKTETKKMSKLDPTK) is disordered. A compositionally biased stretch (basic and acidic residues) spans 1315–1327 (TETKKMSKLDPTK). An N-terminal hotdog fold region spans residues 1340–1483 (HKVIEEKTEP…CTVRFTTDSQ (144 aa)). The region spanning 1340–1658 (HKVIEEKTEP…LRSVPRKALR (319 aa)) is the PKS/mFAS DH domain. The segment at 1353–1658 (QFTVETDISR…LRSVPRKALR (306 aa)) is product template (PT) domain. Histidine 1372 serves as the catalytic Proton acceptor; for dehydratase activity. Residues 1510 to 1658 (LTHYNTKSGY…LRSVPRKALR (149 aa)) form a C-terminal hotdog fold region. Aspartate 1570 serves as the catalytic Proton donor; for dehydratase activity. The disordered stretch occupies residues 1665–1734 (MDKGIRQRGG…AALKASVPKA (70 aa)). The span at 1677-1698 (GAAKGAVAAPAPAKKMVEPVKA) shows a compositional bias: low complexity. The span at 1708–1723 (AAPPSPSKAAPPPAPK) shows a compositional bias: pro residues. The span at 1724 to 1734 (PAALKASVPKA) shows a compositional bias: low complexity. Carrier domains follow at residues 1733-1812 (KADP…AGAA), 1877-1953 (SKVF…GGSG), and 2020-2099 (VART…TGSS). An O-(pantetheine 4'-phosphoryl)serine mark is found at serine 1770, serine 1911, and serine 2057. Low complexity predominate over residues 2098 to 2115 (SSADSDSSSVASNPADPA). Positions 2098–2149 (SSADSDSSSVASNPADPAATPPRSESSDTEPDDEAPSKPKSGPGSTDSCRST) are disordered. Over residues 2140–2149 (PGSTDSCRST) the composition is skewed to polar residues. A thioesterase/Claisen cyclase (TE/CLC) domain region spans residues 2164–2393 (TLFLLPDGGG…KARVNYVSDL (230 aa)). Serine 2234 functions as the For thioesterase activity in the catalytic mechanism.

Pantetheine 4'-phosphate is required as a cofactor.

It carries out the reaction hexanoyl-[ACP] + 7 malonyl-CoA + 6 H(+) = noranthrone + holo-[ACP] + 7 CO2 + 7 CoA + 2 H2O. The protein operates within mycotoxin biosynthesis. Functionally, polyketide synthase; part of the fragmented gene cluster that mediates the biosynthesis of dothistromin (DOTH), a polyketide toxin very similar in structure to the aflatoxin precursor, versicolorin B. The first step of the pathway is the conversion of acetate to norsolorinic acid (NOR) and requires the fatty acid synthase subunits hexA and hexB, as well as the polyketide synthase pksA. PksA combines a hexanoyl starter unit and 7 malonyl-CoA extender units to synthesize the precursor NOR. The hexanoyl starter unit is provided to the acyl-carrier protein (ACP) domain by the fungal fatty acid synthase hexA/hexB. The second step is the conversion of NOR to averantin (AVN) and requires the norsolorinic acid ketoreductase nor1, which catalyzes the dehydration of norsolorinic acid to form (1'S)-averantin. The cytochrome P450 monooxygenase avnA then catalyzes the hydroxylation of AVN to 5'hydroxyaverantin (HAVN). The next step is performed by adhA that transforms HAVN to averufin (AVF). Averufin might then be converted to hydroxyversicolorone by cypX and avfA. Hydroxyversicolorone is further converted versiconal hemiacetal acetate (VHA) by moxY. VHA is then the substrate for the versiconal hemiacetal acetate esterase est1 to yield versiconal (VAL). Versicolorin B synthase vbsA then converts VAL to versicolorin B (VERB) by closing the bisfuran ring. Then, the activity of the versicolorin B desaturase verB leads to versicolorin A (VERA). DotB, a predicted chloroperoxidase, may perform epoxidation of the A-ring of VERA. Alternatively, a cytochrome P450, such as cypX or avnA could catalyze this step. It is also possible that another, uncharacterized, cytochrome P450 enzyme is responsible for this step. Opening of the epoxide could potentially be achieved by the epoxide hydrolase epoA. However, epoA seems not to be required for DOTH biosynthesis, but other epoxide hydrolases may have the ability to complement this hydrolysis. Alternatively, opening of the epoxide ring could be achieved non-enzymatically. The next step is the deoxygenation of ring A to yield the 5,8-dihydroxyanthraquinone which is most likely catalyzed by the NADPH dehydrogenase encoded by ver1. The last stages of DOTH biosynthesis are proposed to involve hydroxylation of the bisfuran. OrdB and norB might have oxidative roles here. An alternative possibility is that cytochrome P450 monoogenases such as avnA and cypX might perform these steps in addition to previously proposed steps. In Dothistroma septosporum (Red band needle blight fungus), this protein is Norsolorinic acid synthase.